Reading from the N-terminus, the 65-residue chain is Muscarinic toxin-like protein 2 (65 aa).

4 disulfide bridges follow: C3/C24, C17/C42, C46/C57, and C58/C63.

This sequence belongs to the three-finger toxin family. Short-chain subfamily. Type C muscarinic toxin sub-subfamily. Monomer. In terms of tissue distribution, expressed by the venom gland.

The protein resides in the secreted. This chain is Muscarinic toxin-like protein 2, found in Naja kaouthia (Monocled cobra).